Consider the following 301-residue polypeptide: MLSTENPNSSPLSDSLEFNERHLDSIISSLVTFPDSPSLSISSSFDRVLDHLLSSGDVSVQDQLVDRTLERFSLLLQSTKRCSQKRATLHNSISWFLPSELTVKVFSMVDTKSLMQASACCTMFNNCAMDPLCYFHIDLTKAFKHVDDRVLRTLLNRSGKQLRSLKLGRVDAPGCLFRSSCLPPLILYGNNARRALKLGRDPPGLGSLFTRSCFDPLKLTGNLLTSLHIYSLGFMNMNSFLDPLSACSNLTDLKIVGVNVLLEPILELLARNCCLIEHLFLDNCSQGKTFTWWGFLYFTVA.

The region spanning 91–146 (NSISWFLPSELTVKVFSMVDTKSLMQASACCTMFNNCAMDPLCYFHIDLTKAFKHV) is the F-box domain.

The sequence is that of F-box protein At4g02733 from Arabidopsis thaliana (Mouse-ear cress).